The following is a 209-amino-acid chain: High frequency lysogenization protein HflD homolog (209 aa).

The stretch at 95–132 forms a coiled coil; the sequence is LERKLAASKGAMNTLGNRIADLSRQLEHFELESDTLMS.

This sequence belongs to the HflD family.

It is found in the cytoplasm. It localises to the cell inner membrane. This Cronobacter sakazakii (strain ATCC BAA-894) (Enterobacter sakazakii) protein is High frequency lysogenization protein HflD homolog.